A 993-amino-acid chain; its full sequence is MAVLKLCEQPPLVQAIFSGDPEEIRMLIHKTEDVNALDSEKRTPLHVAAFLGDAEIIELLILSGARVNAKDNMWLTPLHRAVASRSEEAVQVLIKHSADVNARDKNWQTPLHVAAANKAVKCAEVIIPLLSSVNVSDRGGRTALHHAALNGHMEMVNLLLAKGANINAFDKKDRRALHWAAYMGHLDVVALLINHGAEVTCKDKKGYTPLHAAASNGQISVVKHLLNLGVEIDEINVYGNTALHIACYNGQDAVVNELIDYGANVNQPNNSGFTPLHFAAASTHGALCLELLVNNGADVNIQSKDGKSPLHMTAVHGRFTRSQTLIQNGGEIDCVDKDGNTPLHVAARHGHELLINTLITSGADTAKCGIHSMFPLHLAALNAHSDCCRKLLSSGFEIDTPDTFGRTCLHAAAAGGNVECIKLLQSSGADFHKKDKCGRTPLHYAAANCHFHCIKALVTTGANVNETDDWGRTALHYAAASDMDRNKMILGNAHDNSEELERAREVKEKDAALCLEFLLQNDANPSIRDKEGYNSIHYAAAYGHRQCLELLLERTNTGFEESDGGALKSPLHLAAYNGHHQALEVLLQSLVDLDIRDEKGRTALYLAAFKGHTECVEALVNQGASIFVKDNVTKRTPLHASVINGHTLCLRLLLETADNPEVVDVKDAKGQTPLMLAVAYGHIDAVSLLLEKEANVDAVDIVGCTALHRGIMTGHEECVQMLLEQEASILCKDSRGRTPLHYAAARGHATWLNELLQIALSEEDCCLKDNQGYTPLHWACYNGNENCIEVLLEQKCFRKFIGNPFTPLHCAIINGHESCASLLLGAIDPSIVSCRDDKGRTTLHAAAFGDHAECLQLLLRHDAQVNAVDNSGKTALMMAAENGQAGAVDILVNSAQADLTVKDKDLNTPLHLAISKGHEKCALLILDKIQDESLINAKNSALQTPLHIAARNGLKVVVEELLAKGACVLAVDENASRSNGPRSPPGTAVRKEE.

ANK repeat units follow at residues 7–36 (CEQP…DVNA), 40–69 (EKRT…RVNA), 73–102 (MWLT…DVNA), 106–135 (NWQT…SVNV), 139–168 (GGRT…NINA), 172–201 (KDRR…EVTC), 205–234 (KGYT…EIDE), 238–267 (YGNT…NVNQ), 271–301 (SGFT…DVNI), 305–334 (DGKS…EIDC), 338–367 (DGNT…DTAK), 371–400 (HSMF…EIDT), 404–433 (FGRT…DFHK), 437–466 (CGRT…NVNE), 470–498 (WGRT…DNSE), 531–561 (EGYN…GFEE), 566–595 (ALKS…DLDI), 599–628 (KGRT…SIFV), 633–662 (TKRT…NPEV), 669–698 (KGQT…NVDA), 702–731 (VGCT…SILC), 735–764 (RGRT…SEED), 771–800 (QGYT…FRKF), 803–832 (NPFT…PSIV), 838–867 (KGRT…QVNA), 871–901 (SGKT…DLTV), 905–934 (DLNT…DESL), and 941–970 (ALQT…CVLA). A disordered region spans residues 974-993 (NASRSNGPRSPPGTAVRKEE).

As to quaternary structure, protein phosphatase 6 (PP6) holoenzyme is proposed to be a heterotrimeric complex formed by the catalytic subunit, a SAPS domain-containing subunit (PP6R) and an ankyrin repeat-domain containing regulatory subunit (ARS). Interacts with PPP6R1.

Its function is as follows. Putative regulatory subunit of protein phosphatase 6 (PP6) that may be involved in the recognition of phosphoprotein substrates. In Mus musculus (Mouse), this protein is Serine/threonine-protein phosphatase 6 regulatory ankyrin repeat subunit B (Ankrd44).